The chain runs to 213 residues: Uridine kinase (213 aa).

15–22 serves as a coordination point for ATP; the sequence is GASASGKS.

Belongs to the uridine kinase family.

Its subcellular location is the cytoplasm. It carries out the reaction uridine + ATP = UMP + ADP + H(+). The catalysed reaction is cytidine + ATP = CMP + ADP + H(+). The protein operates within pyrimidine metabolism; CTP biosynthesis via salvage pathway; CTP from cytidine: step 1/3. It functions in the pathway pyrimidine metabolism; UMP biosynthesis via salvage pathway; UMP from uridine: step 1/1. The chain is Uridine kinase from Salmonella newport (strain SL254).